Here is a 214-residue protein sequence, read N- to C-terminus: Outer membrane lipoprotein MapA (214 aa).

The N-terminal stretch at 1 to 17 is a signal peptide; it reads MFKKFLIFIVPILFLSA. A lipid anchor (N-palmitoyl cysteine) is attached at C18. Residue C18 is the site of S-diacylglycerol cysteine attachment.

It localises to the cell outer membrane. The polypeptide is Outer membrane lipoprotein MapA (mapA) (Campylobacter jejuni subsp. jejuni serotype O:6 (strain 81116 / NCTC 11828)).